A 158-amino-acid polypeptide reads, in one-letter code: MGRFLLVTLSLLVMAFFLNGANSCCCPQDWLPRNGFCYKVFNDLKTWDDAEMYCRKFKPGCHLASLHSNADAVEFSEYITDYLTGQGHVWIGLRDTKKKYIWEWTDRSRTDFLPWRKDQPDHFNNEEFCVEIVNFTGYLQWNDDSCTALRPFLCQCKY.

Residues 1-23 (MGRFLLVTLSLLVMAFFLNGANS) form the signal peptide. 3 cysteine pairs are disulfide-bonded: cysteine 26–cysteine 37, cysteine 54–cysteine 154, and cysteine 129–cysteine 146. The 123-residue stretch at 33–155 (RNGFCYKVFN…CTALRPFLCQ (123 aa)) folds into the C-type lectin domain. Ca(2+)-binding residues include glutamine 119, aspartate 121, and glutamate 127. The Galactose-binding motif lies at 119–121 (QPD). Residue asparagine 134 is glycosylated (N-linked (GlcNAc...) asparagine). Residues asparagine 142 and aspartate 143 each coordinate Ca(2+).

It belongs to the true venom lectin family. Dimer. Probably disulfide-linked homodimer. As to expression, expressed by the venom gland.

It localises to the secreted. Galactose-binding lectin that binds to and agglutinates erythrocytes in a calcium-dependent manner. This chain is C-type lectin galactose-binding isoform, found in Pseudechis australis (Mulga snake).